Here is a 1059-residue protein sequence, read N- to C-terminus: Carbamoyl phosphate synthase large chain (1059 aa).

The interval 1 to 401 (MPKRSDIKKI…SLLKACRSLE (401 aa)) is carboxyphosphate synthetic domain. ATP-binding residues include Arg129, Arg169, Gly175, Gly176, Arg208, Ile210, Glu215, Gly241, Ile242, His243, Gln284, and Glu298. The ATP-grasp 1 domain maps to 133-327 (KQLMEELEQP…IAKLAAKIAV (195 aa)). Gln284, Glu298, and Asn300 together coordinate Mg(2+). Mn(2+)-binding residues include Gln284, Glu298, and Asn300. Residues 402–546 (IGVYHNEMSE…YSTYEWENES (145 aa)) form an oligomerization domain region. Positions 547 to 929 (IKSDKESVIV…ALYKAFEASY (383 aa)) are carbamoyl phosphate synthetic domain. An ATP-grasp 2 domain is found at 671-861 (EQALKDLDIP…MAQVATNLIL (191 aa)). Positions 707, 746, 748, 752, 777, 778, 779, 780, 820, and 832 each coordinate ATP. Mg(2+) contacts are provided by Gln820, Glu832, and Asn834. Mn(2+)-binding residues include Gln820, Glu832, and Asn834. An MGS-like domain is found at 930-1059 (LHLPTFGNVI…ESRSFTTEAI (130 aa)). An allosteric domain region spans residues 930–1059 (LHLPTFGNVI…ESRSFTTEAI (130 aa)).

The protein belongs to the CarB family. In terms of assembly, composed of two chains; the small (or glutamine) chain promotes the hydrolysis of glutamine to ammonia, which is used by the large (or ammonia) chain to synthesize carbamoyl phosphate. Tetramer of heterodimers (alpha,beta)4. Mg(2+) is required as a cofactor. Requires Mn(2+) as cofactor.

It catalyses the reaction hydrogencarbonate + L-glutamine + 2 ATP + H2O = carbamoyl phosphate + L-glutamate + 2 ADP + phosphate + 2 H(+). It carries out the reaction hydrogencarbonate + NH4(+) + 2 ATP = carbamoyl phosphate + 2 ADP + phosphate + 2 H(+). It participates in amino-acid biosynthesis; L-arginine biosynthesis; carbamoyl phosphate from bicarbonate: step 1/1. It functions in the pathway pyrimidine metabolism; UMP biosynthesis via de novo pathway; (S)-dihydroorotate from bicarbonate: step 1/3. Functionally, large subunit of the glutamine-dependent carbamoyl phosphate synthetase (CPSase). CPSase catalyzes the formation of carbamoyl phosphate from the ammonia moiety of glutamine, carbonate, and phosphate donated by ATP, constituting the first step of 2 biosynthetic pathways, one leading to arginine and/or urea and the other to pyrimidine nucleotides. The large subunit (synthetase) binds the substrates ammonia (free or transferred from glutamine from the small subunit), hydrogencarbonate and ATP and carries out an ATP-coupled ligase reaction, activating hydrogencarbonate by forming carboxy phosphate which reacts with ammonia to form carbamoyl phosphate. This is Carbamoyl phosphate synthase large chain from Streptococcus thermophilus (strain ATCC BAA-250 / LMG 18311).